The following is an 84-amino-acid chain: U4-theraphotoxin-Hhn1a (84 aa).

An N-terminal signal peptide occupies residues 1–22 (MKVTLIAILTCAAVLVLHTTAA). The propeptide occupies 23–47 (EELEESQLMEVGMPDTELAAVDGER). Cystine bridges form between Cys-51–Cys-65, Cys-55–Cys-76, and Cys-70–Cys-81.

Belongs to the neurotoxin 12 (Hwtx-2) family. 02 (Hwtx-2) subfamily. As to expression, expressed by the venom gland.

Its subcellular location is the secreted. Postsynaptic neurotoxin. The polypeptide is U4-theraphotoxin-Hhn1a (Cyriopagopus hainanus (Chinese bird spider)).